A 517-amino-acid polypeptide reads, in one-letter code: Ribonuclease Y (517 aa).

A helical transmembrane segment spans residues 1-21 (MIESLIALIAAIVGLGIGYLV). The 67-residue stretch at 207 to 273 (LINVINIKND…TKVIELLVED (67 aa)) folds into the KH domain. The 94-residue stretch at 333 to 426 (ALAHSLEVAH…VCAADTLSAA (94 aa)) folds into the HD domain.

Belongs to the RNase Y family.

It localises to the cell membrane. Endoribonuclease that initiates mRNA decay. The sequence is that of Ribonuclease Y from Campylobacter jejuni subsp. doylei (strain ATCC BAA-1458 / RM4099 / 269.97).